A 263-amino-acid chain; its full sequence is Shikimate dehydrogenase (NADP(+)) (263 aa).

Residues 16–18 (SKS) and T65 each bind shikimate. K69 functions as the Proton acceptor in the catalytic mechanism. The shikimate site is built by N90 and D105. NADP(+)-binding positions include 125 to 129 (GSGGS) and L208. Y210 provides a ligand contact to shikimate. NADP(+) is bound at residue G230.

It belongs to the shikimate dehydrogenase family. In terms of assembly, homodimer.

The enzyme catalyses shikimate + NADP(+) = 3-dehydroshikimate + NADPH + H(+). Its pathway is metabolic intermediate biosynthesis; chorismate biosynthesis; chorismate from D-erythrose 4-phosphate and phosphoenolpyruvate: step 4/7. Involved in the biosynthesis of the chorismate, which leads to the biosynthesis of aromatic amino acids. Catalyzes the reversible NADPH linked reduction of 3-dehydroshikimate (DHSA) to yield shikimate (SA). The chain is Shikimate dehydrogenase (NADP(+)) from Helicobacter pylori (strain P12).